Reading from the N-terminus, the 341-residue chain is Methionine import ATP-binding protein MetN 2 (341 aa).

The ABC transporter domain occupies Ile2–Val241. Position 38–45 (Gly38–Ser45) interacts with ATP.

This sequence belongs to the ABC transporter superfamily. Methionine importer (TC 3.A.1.24) family. In terms of assembly, the complex is composed of two ATP-binding proteins (MetN), two transmembrane proteins (MetI) and a solute-binding protein (MetQ).

The protein localises to the cell membrane. It carries out the reaction L-methionine(out) + ATP + H2O = L-methionine(in) + ADP + phosphate + H(+). The enzyme catalyses D-methionine(out) + ATP + H2O = D-methionine(in) + ADP + phosphate + H(+). Part of the ABC transporter complex MetNIQ involved in methionine import. Responsible for energy coupling to the transport system. The chain is Methionine import ATP-binding protein MetN 2 from Staphylococcus epidermidis (strain ATCC 35984 / DSM 28319 / BCRC 17069 / CCUG 31568 / BM 3577 / RP62A).